Reading from the N-terminus, the 99-residue chain is Integration host factor subunit alpha (99 aa).

This sequence belongs to the bacterial histone-like protein family. As to quaternary structure, heterodimer of an alpha and a beta chain.

Its function is as follows. This protein is one of the two subunits of integration host factor, a specific DNA-binding protein that functions in genetic recombination as well as in transcriptional and translational control. The polypeptide is Integration host factor subunit alpha (Enterobacter sp. (strain 638)).